The primary structure comprises 331 residues: FMRFamide-related neuropeptides (331 aa).

An N-terminal signal peptide occupies residues 1–25 (MRCWSPCSLLVVIVIYCLSSHTSEA). Residues 26 to 65 (FDLAQACVESQRLSLLPICDTIFAVQQEGAQQSADDGMRS) constitute a propeptide that is removed on maturation. Residues Phe71 and Phe83 each carry the phenylalanine amide modification. Residues 86–94 (NVPDLPFED) constitute a propeptide that is removed on maturation. A Phenylalanine amide modification is found at Phe100. The propeptide occupies 103–168 (AAPQLDDLLK…YIDDVEDSDV (66 aa)). The disordered stretch occupies residues 122-158 (QKADETSVRRKRSTDAAPQNNAENPEQKNDSAKITKR). The segment covering 146–158 (PEQKNDSAKITKR) has biased composition (basic and acidic residues). Phenylalanine amide occurs at positions 174 and 181. The propeptide occupies 184–194 (NPSDAGNKLTE). Position 200 is a phenylalanine amide (Phe200). Positions 203-205 (DPE) are excised as a propeptide. A Phenylalanine amide modification is found at Phe211. The propeptide occupies 214–216 (SDD). At Phe222 the chain carries Phenylalanine amide. A propeptide spanning residues 225-236 (NPSDVEDELEED) is cleaved from the precursor. Phe242 is subject to Phenylalanine amide. Residues 245–254 (GGEDDEEEAE) constitute a propeptide that is removed on maturation. Phenylalanine amide is present on Phe260. A propeptide spanning residues 263–265 (DPE) is cleaved from the precursor. Phe271 is subject to Phenylalanine amide. The propeptide occupies 274–277 (SGED). Positions 282-296 (RFGRNPDEQEADKRF) are enriched in basic and acidic residues. The disordered stretch occupies residues 282–310 (RFGRNPDEQEADKRFMRFGRGGEDDEVST). Phe283 bears the Phenylalanine amide mark. Positions 286 to 293 (NPDEQEAD) are excised as a propeptide. Position 299 is a phenylalanine amide (Phe299). Positions 302-312 (GGEDDEVSTED) are excised as a propeptide. At Phe318 the chain carries Phenylalanine amide. Positions 321–331 (SADKCKGCLEG) are excised as a propeptide.

Belongs to the FARP (FMRFamide related peptide) family.

The protein localises to the secreted. Excitatory neurotransmitters that directly modulate chromatophore function by activating chromatophore expansion at the chromatophore neuromuscular junction. This chain is FMRFamide-related neuropeptides, found in Doryteuthis pealeii (Longfin inshore squid).